Consider the following 656-residue polypeptide: MIKSQKEYLERIEYLNTLSHHYYNLDEPIVSDAVYDELYQELKAYEEENPNRIQANSPTQKVGATATNEFSKNPHLMRMWSLDDVFNQNELRAWLQRILKVYPNASFVCSPKLDGVSLNLLYQHGKLISATTRGNGLEGELVTNNAKHIANIPHSIAYNGEIEIRGEVIISKEDFDALNKERLNANEPLFANPRNAASGSLRQLDSNITKKRKLQFIPWGVGKHSLHFLRFKECLDFIVSLGFSAIQYLSLNKNHQEIEENYHTLIREREGFFALLDGMVIVVDELDIQKELGYTQKSPKFACAYKFPALEKHTKIVGVINQVGRSGAITPVALLEPVEIAGAMVNRATLHNYSEIEKKNIMLNDRVVVIRSGDVIPKIIKPLESYRDGSQQKIMRPKVCPICSHELLCEEIFTYCQNLNCPARLKESLIHFASKDALNIQGLGDKVIEQLFEEKLIFNALDLYALKLEDLMRLDKFKIKKAQNLLDAIQKSKNPPLWRLINALGIEHIGKGASKTLAKYGLNVLEKSEAEFLEMEGFGVEMAHSLVNFYASNQEFIRSLFELLNPKSSDTAEEKQKSSSVFSDKTIVLTGTLSKPRQEYAQMLENLGAKIASSVSAKTDFLIAGENAGSKLALAQKHGVSVLNEEELLKRLKELD.

NAD(+) is bound by residues 32 to 36 (DAVYD) and 81 to 82 (SL). Lys112 (N6-AMP-lysine intermediate) is an active-site residue. Arg133, Glu167, and Lys306 together coordinate NAD(+). Zn(2+)-binding residues include Cys400, Cys403, Cys416, and Cys421. Positions 577–656 (KSSSVFSDKT…ELLKRLKELD (80 aa)) constitute a BRCT domain.

It belongs to the NAD-dependent DNA ligase family. LigA subfamily. The cofactor is Mg(2+). Mn(2+) serves as cofactor.

It carries out the reaction NAD(+) + (deoxyribonucleotide)n-3'-hydroxyl + 5'-phospho-(deoxyribonucleotide)m = (deoxyribonucleotide)n+m + AMP + beta-nicotinamide D-nucleotide.. DNA ligase that catalyzes the formation of phosphodiester linkages between 5'-phosphoryl and 3'-hydroxyl groups in double-stranded DNA using NAD as a coenzyme and as the energy source for the reaction. It is essential for DNA replication and repair of damaged DNA. The chain is DNA ligase from Helicobacter pylori (strain J99 / ATCC 700824) (Campylobacter pylori J99).